Consider the following 83-residue polypeptide: Protein L83L (83 aa).

Residues 1–26 (MDTSLKKNNGALEADNKNYQNYKDEP) are disordered.

The protein belongs to the asfivirus L83L family. Interacts with host IL1B.

It is found in the host cytoplasm. May subvert the host innate immune response by interacting with host IL1B and interfering with its function. The protein is Protein L83L of Ornithodoros (relapsing fever ticks).